A 661-amino-acid polypeptide reads, in one-letter code: Sodium/potassium/calcium exchanger 2 (661 aa).

At 1–38 the chain is on the cytoplasmic side; sequence MDLQQSTTITSLEKWCLDESLSGCRRHYSVKKKLKLIR. Residues 39–59 form a helical membrane-spanning segment; the sequence is VLGLFMGLVAISTVSFSISAF. Residues 60 to 132 are Extracellular-facing; it reads SETDTQSTGE…DIFSLEERRK (73 aa). Residues 99–120 are disordered; sequence PQPPLSKEGESENSTDHAQGDY. A compositionally biased stretch (basic and acidic residues) spans 105 to 120; that stretch reads KEGESENSTDHAQGDY. Residue Asn111 is glycosylated (N-linked (GlcNAc...) asparagine). The helical transmembrane segment at 133 to 153 threads the bilayer; it reads GAIILHVIGMIYMFIALAIVC. Topologically, residues 154–178 are cytoplasmic; the sequence is DEFFVPSLTVITEKLGISDDVAGAT. Residues 174-214 form an Alpha-1 repeat; that stretch reads VAGATFMAAGGSAPELFTSLIGVFIAHSNVGIGTIVGSAVF. Residues 179-199 form a helical membrane-spanning segment; that stretch reads FMAAGGSAPELFTSLIGVFIA. Residues 200-204 are Extracellular-facing; it reads HSNVG. The chain crosses the membrane as a helical span at residues 205–225; sequence IGTIVGSAVFNILFVIGMCAL. Over 226–243 the chain is Cytoplasmic; the sequence is FSREILNLTWWPLFRDVS. A helical transmembrane segment spans residues 244–264; sequence FYIVDLIMLIIFFLDNVIMWW. Glu265 is a topological domain (extracellular). Residues 266 to 286 form a helical membrane-spanning segment; that stretch reads SLLLLTAYFCYVVFMKFNVQV. Residues 287–497 lie on the Cytoplasmic side of the membrane; it reads EKWVKQMINR…PDVRKPSSRK (211 aa). A disordered region spans residues 306–336; that stretch reads EAQAKPSAARDKDEPTLPAKPRLQRGGSSAS. Phosphoserine occurs at positions 336 and 340. A disordered region spans residues 397–439; it reads DENERQNGAANHVEKIELPNSTSTDVEMTPSSDASEPVQNGNL. Over residues 415-439 the composition is skewed to polar residues; that stretch reads PNSTSTDVEMTPSSDASEPVQNGNL. Residues 498–518 traverse the membrane as a helical segment; the sequence is FFPITFFGSITWIAVFSYLMV. The Extracellular portion of the chain corresponds to 519 to 533; sequence WWAHQVGETIGISEE. The helical transmembrane segment at 534–554 threads the bilayer; the sequence is IMGLTILAAGTSIPDLITSVI. One copy of the Alpha-2 repeat lies at 541–572; it reads AAGTSIPDLITSVIVARKGLGDMAVSSSVGSN. At 555–569 the chain is on the cytoplasmic side; it reads VARKGLGDMAVSSSV. Residues 570–590 form a helical membrane-spanning segment; sequence GSNIFDITVGLPLPWLLYTVI. The Extracellular segment spans residues 591 to 602; sequence HRFQPVAVSSNG. The chain crosses the membrane as a helical span at residues 603-623; sequence LFCAIVLLFIMLLFVILSIAL. Over 624 to 630 the chain is Cytoplasmic; it reads CKWRMNK. A helical membrane pass occupies residues 631–651; that stretch reads ILGFIMFGLYFVFLVVSVLLE. The Extracellular segment spans residues 652–661; the sequence is DRILTCPVSI.

Belongs to the Ca(2+):cation antiporter (CaCA) (TC 2.A.19) family. SLC24A subfamily.

Its subcellular location is the cell membrane. The catalysed reaction is Ca(2+)(out) + K(+)(out) + 4 Na(+)(in) = Ca(2+)(in) + K(+)(in) + 4 Na(+)(out). Calcium, potassium:sodium antiporter that transports 1 Ca(2+) and 1 K(+) in exchange for 4 Na(+). Required for learming and memory by regulating neuronal Ca(2+), which is essential for the development of synaptic plasticity. The chain is Sodium/potassium/calcium exchanger 2 (SLC24A2) from Homo sapiens (Human).